The following is a 394-amino-acid chain: Flap endonuclease 1 (394 aa).

The N-domain stretch occupies residues 1 to 104 (MGIKQLFSVI…GELAKRFQRK (104 aa)). Residue Asp-34 coordinates Mg(2+). 2 residues coordinate DNA: Arg-47 and Arg-70. Mg(2+) contacts are provided by Asp-86, Glu-158, Glu-160, Asp-179, and Asp-181. The interval 122-253 (DVEKFSRRTV…STALKLIREH (132 aa)) is I-domain. DNA is bound at residue Glu-158. Gly-231 and Asp-233 together coordinate DNA. Position 233 (Asp-233) interacts with Mg(2+). Positions 341–349 (QQARIEGFF) are interaction with PCNA. Positions 356–383 (EEEKKAHKRKLEEQAEQKRKKVKEEKKE) are enriched in basic and acidic residues. Residues 356 to 394 (EEEKKAHKRKLEEQAEQKRKKVKEEKKEKAKLKAKPRGA) form a disordered region. Residues 384 to 394 (KAKLKAKPRGA) show a composition bias toward basic residues.

The protein belongs to the XPG/RAD2 endonuclease family. FEN1 subfamily. As to quaternary structure, interacts with PCNA. Three molecules of dnr-8/fen1 bind to one PCNA trimer with each molecule binding to one PCNA monomer. PCNA stimulates the nuclease activity without altering cleavage specificity. Mg(2+) is required as a cofactor. In terms of processing, phosphorylated. Phosphorylation upon DNA damage induces relocalization to the nuclear plasma.

The protein resides in the nucleus. It is found in the nucleolus. It localises to the nucleoplasm. The protein localises to the mitochondrion. In terms of biological role, structure-specific nuclease with 5'-flap endonuclease and 5'-3' exonuclease activities involved in DNA replication and repair. During DNA replication, cleaves the 5'-overhanging flap structure that is generated by displacement synthesis when DNA polymerase encounters the 5'-end of a downstream Okazaki fragment. It enters the flap from the 5'-end and then tracks to cleave the flap base, leaving a nick for ligation. Also involved in the long patch base excision repair (LP-BER) pathway, by cleaving within the apurinic/apyrimidinic (AP) site-terminated flap. Acts as a genome stabilization factor that prevents flaps from equilibrating into structures that lead to duplications and deletions. Also possesses 5'-3' exonuclease activity on nicked or gapped double-stranded DNA, and exhibits RNase H activity. Also involved in replication and repair of rDNA and in repairing mitochondrial DNA. The sequence is that of Flap endonuclease 1 (dnr-8) from Neurospora crassa (strain ATCC 24698 / 74-OR23-1A / CBS 708.71 / DSM 1257 / FGSC 987).